Reading from the N-terminus, the 98-residue chain is HssA/B-like protein 34 (98 aa).

Disordered stretches follow at residues 1 to 26 (MTLF…SFGS) and 60 to 98 (AKSS…SCSC). The segment covering 60-72 (AKSSGGSCGGKGG) has biased composition (gly residues). Residues 73 to 88 (SHNHGHGHGHGPHGHG) are compositionally biased toward basic residues. Over residues 89-98 (GKGSGGSCSC) the composition is skewed to gly residues.

The protein belongs to the hssA/B family.

This chain is HssA/B-like protein 34 (hssl34), found in Dictyostelium discoideum (Social amoeba).